Reading from the N-terminus, the 227-residue chain is Ribose-5-phosphate isomerase A (227 aa).

Substrate is bound by residues 26–29 (TGST), 82–85 (DGAD), and 95–98 (KGGG). Glu-104 acts as the Proton acceptor in catalysis. Residue Lys-122 participates in substrate binding.

Belongs to the ribose 5-phosphate isomerase family. In terms of assembly, homodimer.

The enzyme catalyses aldehydo-D-ribose 5-phosphate = D-ribulose 5-phosphate. The protein operates within carbohydrate degradation; pentose phosphate pathway; D-ribose 5-phosphate from D-ribulose 5-phosphate (non-oxidative stage): step 1/1. Its function is as follows. Catalyzes the reversible conversion of ribose-5-phosphate to ribulose 5-phosphate. This chain is Ribose-5-phosphate isomerase A, found in Streptococcus pneumoniae serotype 4 (strain ATCC BAA-334 / TIGR4).